Here is a 413-residue protein sequence, read N- to C-terminus: 2,3-bisphosphoglycerate-independent phosphoglycerate mutase (413 aa).

Belongs to the BPG-independent phosphoglycerate mutase family. A-PGAM subfamily.

The catalysed reaction is (2R)-2-phosphoglycerate = (2R)-3-phosphoglycerate. It functions in the pathway carbohydrate degradation; glycolysis; pyruvate from D-glyceraldehyde 3-phosphate: step 3/5. In terms of biological role, catalyzes the interconversion of 2-phosphoglycerate and 3-phosphoglycerate. In Sulfurisphaera tokodaii (strain DSM 16993 / JCM 10545 / NBRC 100140 / 7) (Sulfolobus tokodaii), this protein is 2,3-bisphosphoglycerate-independent phosphoglycerate mutase.